Reading from the N-terminus, the 312-residue chain is Protein PET122, mitochondrial (312 aa).

A mitochondrion-targeting transit peptide spans 1–12 (MIPTFRIQIRRY).

Its subcellular location is the mitochondrion inner membrane. Functionally, required for expression of the mitochondrial gene for cytochrome c oxidase subunit 3 (COX3). PET122 seems to work by directly interacting with the small ribosomal subunit to promote translation initiation on the COX3 mRNA. This is Protein PET122, mitochondrial (PET122) from Lachancea kluyveri (strain ATCC 58438 / CBS 3082 / BCRC 21498 / NBRC 1685 / JCM 7257 / NCYC 543 / NRRL Y-12651) (Yeast).